The chain runs to 533 residues: Undecaprenyl phosphate-alpha-4-amino-4-deoxy-L-arabinose arabinosyl transferase (533 aa).

A run of 13 helical transmembrane segments spans residues 10 to 30, 64 to 84, 86 to 106, 113 to 133, 137 to 157, 170 to 190, 207 to 227, 257 to 277, 290 to 310, 312 to 332, 345 to 365, 377 to 397, and 402 to 422; these read LLLA…GLWI, PAGY…LFGV, IASA…AGKI, SFAS…AGYS, PQFT…VHSI, VACG…PAII, FGPL…LAVH, WWFY…LLPV, DTAF…LSKG, LPTY…DALV, VNGI…IYVQ, HLLL…LQGI, and FWAL…AALP.

It belongs to the glycosyltransferase 83 family.

Its subcellular location is the cell inner membrane. The catalysed reaction is 4-amino-4-deoxy-alpha-L-arabinopyranosyl di-trans,octa-cis-undecaprenyl phosphate + lipid IVA = lipid IIA + di-trans,octa-cis-undecaprenyl phosphate.. It functions in the pathway lipopolysaccharide metabolism; 4-amino-4-deoxy-beta-L-arabinose-lipid A biosynthesis. Its function is as follows. Catalyzes the transfer of the L-Ara4N moiety of the glycolipid undecaprenyl phosphate-alpha-L-Ara4N to lipid A. The modified arabinose is attached to lipid A and is required for resistance to polymyxin and cationic antimicrobial peptides. This Pseudomonas savastanoi pv. phaseolicola (strain 1448A / Race 6) (Pseudomonas syringae pv. phaseolicola (strain 1448A / Race 6)) protein is Undecaprenyl phosphate-alpha-4-amino-4-deoxy-L-arabinose arabinosyl transferase.